The sequence spans 413 residues: Serine hydroxymethyltransferase (413 aa).

(6S)-5,6,7,8-tetrahydrofolate contacts are provided by residues Leu-119 and 123 to 125; that span reads GHL. Lys-228 is modified (N6-(pyridoxal phosphate)lysine).

The protein belongs to the SHMT family. In terms of assembly, homodimer. The cofactor is pyridoxal 5'-phosphate.

It is found in the cytoplasm. It carries out the reaction (6R)-5,10-methylene-5,6,7,8-tetrahydrofolate + glycine + H2O = (6S)-5,6,7,8-tetrahydrofolate + L-serine. It functions in the pathway one-carbon metabolism; tetrahydrofolate interconversion. Its pathway is amino-acid biosynthesis; glycine biosynthesis; glycine from L-serine: step 1/1. Functionally, catalyzes the reversible interconversion of serine and glycine with tetrahydrofolate (THF) serving as the one-carbon carrier. This reaction serves as the major source of one-carbon groups required for the biosynthesis of purines, thymidylate, methionine, and other important biomolecules. Also exhibits THF-independent aldolase activity toward beta-hydroxyamino acids, producing glycine and aldehydes, via a retro-aldol mechanism. In Desulfatibacillum aliphaticivorans, this protein is Serine hydroxymethyltransferase.